The primary structure comprises 119 residues: Ribosome-binding factor A (119 aa).

Belongs to the RbfA family. As to quaternary structure, monomer. Binds 30S ribosomal subunits, but not 50S ribosomal subunits or 70S ribosomes.

Its subcellular location is the cytoplasm. Functionally, one of several proteins that assist in the late maturation steps of the functional core of the 30S ribosomal subunit. Associates with free 30S ribosomal subunits (but not with 30S subunits that are part of 70S ribosomes or polysomes). Required for efficient processing of 16S rRNA. May interact with the 5'-terminal helix region of 16S rRNA. The polypeptide is Ribosome-binding factor A (Buchnera aphidicola subsp. Acyrthosiphon pisum (strain Tuc7)).